The following is a 355-amino-acid chain: uncharacterized protein (355 aa).

The protein localises to the cytoplasm. This is an uncharacterized protein from Saccharomyces cerevisiae (strain ATCC 204508 / S288c) (Baker's yeast).